The primary structure comprises 87 residues: Small ribosomal subunit protein uS17 (87 aa).

This sequence belongs to the universal ribosomal protein uS17 family. Part of the 30S ribosomal subunit.

In terms of biological role, one of the primary rRNA binding proteins, it binds specifically to the 5'-end of 16S ribosomal RNA. This Onion yellows phytoplasma (strain OY-M) protein is Small ribosomal subunit protein uS17.